A 471-amino-acid chain; its full sequence is Putative multidrug resistance protein MdtD (471 aa).

Residues 1-11 (MTDLPDNTRWQ) lie on the Periplasmic side of the membrane. The helical transmembrane segment at 12 to 32 (LWIVAFGFFMQSLDTTIVNTA) threads the bilayer. Residues 33–48 (LPSMAQSLGESPLHMH) lie on the Cytoplasmic side of the membrane. A helical transmembrane segment spans residues 49–69 (MVIVSYVLTVAVMLPASGWLA). Over 70-76 (DKVGVRN) the chain is Periplasmic. Residues 77 to 97 (IFFTAIVLFTLGSLFCALSGT) traverse the membrane as a helical segment. Residues 98-101 (LNEL) lie on the Cytoplasmic side of the membrane. The chain crosses the membrane as a helical span at residues 102–124 (LLARALQGVGGAMMVPVGRLTVM). Over 125–137 (KIVPREQYMAAMT) the chain is Periplasmic. Residues 138 to 158 (FVTLPGQVGPLLGPALGGLLV) form a helical membrane-spanning segment. Over 159–164 (EYASWH) the chain is Cytoplasmic. A helical membrane pass occupies residues 165–185 (WIFLINIPVGIIGAIATLMLM). Residues 186-196 (PNYTMQTRRFD) are Periplasmic-facing. Residues 197–217 (LSGFLLLAIGMAVLTLALDGS) traverse the membrane as a helical segment. The Cytoplasmic portion of the chain corresponds to 218–224 (KGTGLSP). Residues 225–245 (LAITGLVAVGVVALVLYLLHA) traverse the membrane as a helical segment. At 246 to 262 (RNNNRALFSLKLFRTRT) the chain is on the periplasmic side. A helical transmembrane segment spans residues 263 to 283 (FSLGLAGSFAGRIGSGMLPFM). Residues 284–285 (TP) are Cytoplasmic-facing. Residues 286–306 (VFLQIGLGFSPFHAGLMMIPM) form a helical membrane-spanning segment. Topologically, residues 307 to 341 (VLGSMGMKRIVVQVVNRFGYRRVLVATTLGLSLVT) are periplasmic. A helical membrane pass occupies residues 342-362 (LLFMTTALLGWYYVLPFVLFL). The Cytoplasmic portion of the chain corresponds to 363–395 (QGMVNSTRFSSMNTLTLKDLPDNLASSGNSLLS). A helical transmembrane segment spans residues 396–416 (MIMQLSMSIGVTIAGLLLGLF). The Periplasmic segment spans residues 417–430 (GSQHVSVDSGTTQT). A helical membrane pass occupies residues 431–451 (VFMYTWLSMAFIIALPAFIFA). The Cytoplasmic segment spans residues 452–471 (RVPNDTHQNVAISRRKRSAQ).

This sequence belongs to the major facilitator superfamily. TCR/Tet family.

It is found in the cell inner membrane. The protein is Putative multidrug resistance protein MdtD of Escherichia coli O17:K52:H18 (strain UMN026 / ExPEC).